The primary structure comprises 723 residues: Catalase-peroxidase (723 aa).

The segment at residues tryptophan 96–tyrosine 224 is a cross-link (tryptophyl-tyrosyl-methioninium (Trp-Tyr) (with M-250)). Histidine 97 serves as the catalytic Proton acceptor. Positions tyrosine 224–methionine 250 form a cross-link, tryptophyl-tyrosyl-methioninium (Tyr-Met) (with W-96). Histidine 265 provides a ligand contact to heme b.

The protein belongs to the peroxidase family. Peroxidase/catalase subfamily. As to quaternary structure, homodimer or homotetramer. It depends on heme b as a cofactor. In terms of processing, formation of the three residue Trp-Tyr-Met cross-link is important for the catalase, but not the peroxidase activity of the enzyme.

It catalyses the reaction H2O2 + AH2 = A + 2 H2O. It carries out the reaction 2 H2O2 = O2 + 2 H2O. Bifunctional enzyme with both catalase and broad-spectrum peroxidase activity. This Leptothrix cholodnii (strain ATCC 51168 / LMG 8142 / SP-6) (Leptothrix discophora (strain SP-6)) protein is Catalase-peroxidase.